Reading from the N-terminus, the 129-residue chain is uncharacterized protein (129 aa).

The 107-residue stretch at I3–V109 folds into the HIT domain. The Histidine triad motif motif lies at H94–H98.

This is an uncharacterized protein from Methanocaldococcus jannaschii (strain ATCC 43067 / DSM 2661 / JAL-1 / JCM 10045 / NBRC 100440) (Methanococcus jannaschii).